We begin with the raw amino-acid sequence, 240 residues long: Fibronectin type III domain-containing protein 5 (240 aa).

Over residues 1–10 the composition is skewed to gly residues; sequence MQAARGGAGR. The segment at 1–30 is disordered; it reads MQAARGGAGRPGREGRGLERECERSPGVGA. Residues 11–24 are compositionally biased toward basic and acidic residues; that stretch reads PGREGRGLERECER. The Fibronectin type-III domain maps to 64 to 155; that stretch reads APVNVTVRHL…EPVLFKTPRE (92 aa). Asparagine 67 and asparagine 112 each carry an N-linked (GlcNAc...) asparagine glycan. The chain crosses the membrane as a helical span at residues 181 to 201; sequence GEVLIIVVVLFMWAGVIALFC. Over residues 210-221 the composition is skewed to basic and acidic residues; that stretch reads NEPNNNKEKTKS. Positions 210-240 are disordered; that stretch reads NEPNNNKEKTKSASETSTPEHQGGGLLRSKI. Positions 231 to 240 are enriched in gly residues; that stretch reads QGGGLLRSKI. Positions 238-240 match the Microbody targeting signal motif; sequence SKI.

As to quaternary structure, dimer; may exist in other oligomeric forms. N-Glycosylated. Post-translationally, the extracellular domain is cleaved and released from the cell membrane.

It is found in the cell membrane. It localises to the peroxisome membrane. The protein localises to the secreted. Its function is as follows. Mediates beneficial effects of muscular exercise. Induces browning of white adipose tissue by stimulating UCP1 expression, at least in part, via the nuclear receptor PPARA. The chain is Fibronectin type III domain-containing protein 5 (Fndc5) from Rattus norvegicus (Rat).